Consider the following 541-residue polypeptide: Chaperonin GroEL 2 (541 aa).

ATP-binding positions include 29-32 and 86-90; these read TLGP and DGTTT. Residue lysine 132 forms an Isoglutamyl lysine isopeptide (Lys-Gln) (interchain with Q-Cter in protein Pup) linkage. ATP-binding positions include glycine 413, 476–478, and aspartate 492; that span reads NAA.

It belongs to the chaperonin (HSP60) family. In terms of assembly, forms a cylinder of 14 subunits composed of two heptameric rings stacked back-to-back. Interacts with the co-chaperonin GroES.

Its subcellular location is the secreted. The protein resides in the capsule. It localises to the cell surface. It is found in the cell wall. It carries out the reaction ATP + H2O + a folded polypeptide = ADP + phosphate + an unfolded polypeptide.. In terms of biological role, together with its co-chaperonin GroES, plays an essential role in assisting protein folding. The GroEL-GroES system forms a nano-cage that allows encapsulation of the non-native substrate proteins and provides a physical environment optimized to promote and accelerate protein folding. The chain is Chaperonin GroEL 2 from Mycolicibacterium smegmatis (strain ATCC 700084 / mc(2)155) (Mycobacterium smegmatis).